Reading from the N-terminus, the 335-residue chain is Aliphatic sulfonates import ATP-binding protein SsuB (335 aa).

The tract at residues 29-61 (DGDAQDAAVYERDGGAHAPPFASGGAPPDGDRA) is disordered. An ABC transporter domain is found at 74–293 (VRLTRVSKRY…ARASAAFAAL (220 aa)). ATP is bound at residue 106–113 (GRSGCGKS). A disordered region spans residues 308–335 (APAAPNAAGPEGASRGRAAPASGLRWAV).

This sequence belongs to the ABC transporter superfamily. Aliphatic sulfonates importer (TC 3.A.1.17.2) family. In terms of assembly, the complex is composed of two ATP-binding proteins (SsuB), two transmembrane proteins (SsuC) and a solute-binding protein (SsuA).

It is found in the cell inner membrane. The enzyme catalyses ATP + H2O + aliphatic sulfonate-[sulfonate-binding protein]Side 1 = ADP + phosphate + aliphatic sulfonateSide 2 + [sulfonate-binding protein]Side 1.. In terms of biological role, part of the ABC transporter complex SsuABC involved in aliphatic sulfonates import. Responsible for energy coupling to the transport system. In Burkholderia pseudomallei (strain 1710b), this protein is Aliphatic sulfonates import ATP-binding protein SsuB.